The following is a 544-amino-acid chain: L-aspartate oxidase (544 aa).

FAD-binding positions include 17–20 (SGGA), Lys-39, 46–53 (STFYAQGG), and Asp-221. Arg-288 (proton donor/acceptor) is an active-site residue. FAD contacts are provided by residues Glu-373 and 389–390 (SL).

The protein belongs to the FAD-dependent oxidoreductase 2 family. NadB subfamily. The cofactor is FAD.

The protein resides in the cytoplasm. It carries out the reaction L-aspartate + O2 = iminosuccinate + H2O2. It participates in cofactor biosynthesis; NAD(+) biosynthesis; iminoaspartate from L-aspartate (oxidase route): step 1/1. Functionally, catalyzes the oxidation of L-aspartate to iminoaspartate, the first step in the de novo biosynthesis of NAD(+). This chain is L-aspartate oxidase, found in Acinetobacter baylyi (strain ATCC 33305 / BD413 / ADP1).